The following is a 665-amino-acid chain: Cinnamate reductase (665 aa).

Q109 lines the FMN pocket. The active-site Proton donor is Y182. Residues R230, R319, and 341-342 (GR) each bind FMN. [4Fe-4S] cluster contacts are provided by C365, C368, C372, and C384. FAD contacts are provided by A415, E434, N442, K452, and A479.

This sequence in the N-terminal section; belongs to the NADH:flavin oxidoreductase/NADH oxidase family. The cofactor is FMN. It depends on FAD as a cofactor. [4Fe-4S] cluster serves as cofactor.

The catalysed reaction is 3-phenylpropanoate + NAD(+) = (E)-cinnamate + NADH + H(+). Its pathway is amino-acid degradation; L-phenylalanine degradation. Its function is as follows. Involved in the fermentation of L-phenylalanine via a Stickland reaction. Catalyzes the reduction of (E)-cinnamate to yield 3-phenylpropionate. This Clostridium sporogenes (strain ATCC 7955 / DSM 767 / NBRC 16411 / NCIMB 8053 / NCTC 8594 / PA 3679) protein is Cinnamate reductase.